We begin with the raw amino-acid sequence, 450 residues long: MSHSACPKPATARHSQALTGEIRIPGDKSISHRSFMFGGLASGKTRITGLLEGEDVINTGRAMQAMGARIRKEGDVWIINGVGNGCLLQPEAPLDFGNAGTGARLTMGLVGTYDMKTSFIGDASLSKRPMGRVLNPLREMGVQVEAAEGDRMPLTLIGPRTANPIAYRVPMASAQVKSAVLLAGLNTPGVTTVIEPVMTRDHTEKMLQDFGADLTVETDKDGVRHIRIVGQGKLTGQTIDVPGDPSSTAFPLVAALLVEGSEVTIRNVLMNPTRTGLILTLQEMGADIEIIDPRLAGGEDVADLRVKASKLKGVVVPPERAPSMIDEYPVLAIAASFAEGETVMDGLDELRVKESDRLAAVARGLEANGVDCTEGEMSLTVRGRPGGKGLGGGTVATHLDHRIAMSFLVMGLASEKPVTVDDSTMIATSFPEFMGMMAGLGAKIAESGAE.

Residues K28, S29, and R33 each contribute to the 3-phosphoshikimate site. Residue K28 coordinates phosphoenolpyruvate. Phosphoenolpyruvate is bound by residues G100 and R128. 3-phosphoshikimate-binding residues include S173, Q175, D326, and K353. Q175 contacts phosphoenolpyruvate. D326 acts as the Proton acceptor in catalysis. 2 residues coordinate phosphoenolpyruvate: R357 and R402.

The protein belongs to the EPSP synthase family. In terms of assembly, monomer.

It is found in the cytoplasm. It catalyses the reaction 3-phosphoshikimate + phosphoenolpyruvate = 5-O-(1-carboxyvinyl)-3-phosphoshikimate + phosphate. It participates in metabolic intermediate biosynthesis; chorismate biosynthesis; chorismate from D-erythrose 4-phosphate and phosphoenolpyruvate: step 6/7. Functionally, catalyzes the transfer of the enolpyruvyl moiety of phosphoenolpyruvate (PEP) to the 5-hydroxyl of shikimate-3-phosphate (S3P) to produce enolpyruvyl shikimate-3-phosphate and inorganic phosphate. This Brucella abortus biovar 1 (strain 9-941) protein is 3-phosphoshikimate 1-carboxyvinyltransferase.